The following is a 650-amino-acid chain: Probable potassium transport system protein Kup 1 (650 aa).

The next 12 membrane-spanning stretches (helical) occupy residues 12 to 32, 54 to 74, 97 to 117, 139 to 159, 170 to 190, 216 to 236, 249 to 269, 295 to 315, 344 to 364, 375 to 395, 400 to 420, and 428 to 448; these read GLLIAIGIVYGDIGTSPLYVM, ISLVLWTVTLLTTLQTVIIAL, WLVLPALIGGAAILADGTLTP, VSSQSMVIAITVLILLVLFSI, AFGPIMFVWFTFLGVIGLINM, AGIFILGSIFLATTGAEALYS, SWPFVFVCLSLNYFGQGVWIL, LAAIILATIAAVIASQALITG, IYIPSINKGICVATIAIVLYF, GLSITISMLMTTILLYEWLAM, PVWNWIFLIFFGVLDIMFMIS, and GGYVSLFIAGAIGFIMYVWYY.

It belongs to the HAK/KUP transporter (TC 2.A.72) family.

Its subcellular location is the cell membrane. It carries out the reaction K(+)(in) + H(+)(in) = K(+)(out) + H(+)(out). Its function is as follows. Transport of potassium into the cell. Likely operates as a K(+):H(+) symporter. The protein is Probable potassium transport system protein Kup 1 of Lactobacillus acidophilus (strain ATCC 700396 / NCK56 / N2 / NCFM).